Consider the following 101-residue polypeptide: Large ribosomal subunit protein bL28 (101 aa).

This sequence belongs to the bacterial ribosomal protein bL28 family.

This Caulobacter sp. (strain K31) protein is Large ribosomal subunit protein bL28.